Reading from the N-terminus, the 472-residue chain is FAD-linked oxidoreductase azaL (472 aa).

The first 18 residues, 1-18, serve as a signal peptide directing secretion; sequence MFRTILLCSLGLTTLSSA. Residues asparagine 22, asparagine 44, asparagine 102, asparagine 123, asparagine 227, asparagine 246, asparagine 273, asparagine 305, asparagine 318, asparagine 390, and asparagine 415 are each glycosylated (N-linked (GlcNAc...) asparagine). One can recognise an FAD-binding PCMH-type domain in the interval 54 to 228; it reads TTYDAPTYIG…TSATYKIYNA (175 aa).

The protein belongs to the oxygen-dependent FAD-linked oxidoreductase family.

Its pathway is secondary metabolite biosynthesis. Its function is as follows. FAD-linked oxidoreductase; part of the gene cluster that mediates the biosynthesis of azaphilones, a class of fungal metabolites characterized by a highly oxygenated pyrano-quinone bicyclic core and exhibiting a broad range of bioactivities. In the first step, the non-reducing polyketide synthase azaA forms the hexaketide precursor from successive condensations of five malonyl-CoA units, presumably with a simple acetyl-CoA starter unit. The reactive polyketide chain then undergoes a PT-mediated C2-C7 cyclization to afford the aromatic ring and is eventually released as an aldehyde through the R-domain. The putative ketoreductase azaE is proposed to catalyze the reduction of the terminal ketone resulting in the early culture product FK17-P2a. The monooxygenase azaH was demonstrated to be the only enzyme required to convert FK17-P2a to azanigerone E. AzaH first hydroxylates the benzaldehyde intermediate FK17-P2a at C4, which triggers the formation of the pyran-ring to afford azanigerone E. In parallel, the 2,4-dimethylhexanoyl chain is synthesized by the HR-PKS azaB and is proposed to be transferred to the C4-hydroxyl of azanigerone E by the acyltransferase azaD directly from the ACP domain of azaB. Alternatively, the 2,4-dimethyl-hexanoyl chain may be offloaded from the HR-PKS as a carboxylic acid and converted to an acyl-CoA by azaF. The resulting acyl-CoA molecule could then be taken up as a substrate by AzaD to form azanigerone B. To yield the carboxylic acid substituent in azanigerone A, the hydroxypropyl side chain of azanigerone B would need to undergo a C-C oxidative cleavage catalyzed by cytochrome P450 AzaI. AzaI is proposed to act on a vicinal diol that leads to a C-C bond scission either through an alkoxyradical intermediate or a peroxy complex. In the biosynthesis of azanigerone A, azanigerone B first undergoes hydroxylation at C10, possibly catalyzed by one of the two FAD-dependent monooxygenases encoded in the cluster, azaG or azaL, resulting in the vicinal diol azanigerone C. Oxidative cleavage of azanigerone C by azaI would yield the corresponding aldehyde derivative of azanigerone A. Finally, the dehydrogenase azaJ is proposed to convert the aldehyde functional group into the carboxylic acid, completing the conversion from azanigerone B to azanigerone A. Alternatively, the oxidation of aldehyde to carboxylic acid may be catalyzed by the same P450 enzyme azaI via consecutive oxidation or by endogenous alcohol dehydrogenase. The sequence is that of FAD-linked oxidoreductase azaL from Aspergillus niger (strain ATCC 1015 / CBS 113.46 / FGSC A1144 / LSHB Ac4 / NCTC 3858a / NRRL 328 / USDA 3528.7).